The sequence spans 173 residues: Photosystem I assembly protein Ycf3 (173 aa).

TPR repeat units lie at residues Ala35–Pro68, Gly72–Gln105, and Gly120–Gly153.

It belongs to the Ycf3 family.

It is found in the cellular thylakoid membrane. Functionally, essential for the assembly of the photosystem I (PSI) complex. May act as a chaperone-like factor to guide the assembly of the PSI subunits. The chain is Photosystem I assembly protein Ycf3 from Synechococcus sp. (strain WH7803).